Consider the following 203-residue polypeptide: Orotate phosphoribosyltransferase (203 aa).

5-phospho-alpha-D-ribose 1-diphosphate-binding positions include Arg-94, Lys-98, His-100, and 120 to 128 (EDLISTGGS). Ser-124 lines the orotate pocket.

This sequence belongs to the purine/pyrimidine phosphoribosyltransferase family. PyrE subfamily. As to quaternary structure, homodimer. The cofactor is Mg(2+).

It catalyses the reaction orotidine 5'-phosphate + diphosphate = orotate + 5-phospho-alpha-D-ribose 1-diphosphate. It participates in pyrimidine metabolism; UMP biosynthesis via de novo pathway; UMP from orotate: step 1/2. Functionally, catalyzes the transfer of a ribosyl phosphate group from 5-phosphoribose 1-diphosphate to orotate, leading to the formation of orotidine monophosphate (OMP). This is Orotate phosphoribosyltransferase from Staphylococcus saprophyticus subsp. saprophyticus (strain ATCC 15305 / DSM 20229 / NCIMB 8711 / NCTC 7292 / S-41).